Consider the following 381-residue polypeptide: Transaldolase 2 (381 aa).

The active-site Schiff-base intermediate with substrate is the Lys141.

It belongs to the transaldolase family. Type 2 subfamily.

Its subcellular location is the cytoplasm. The catalysed reaction is D-sedoheptulose 7-phosphate + D-glyceraldehyde 3-phosphate = D-erythrose 4-phosphate + beta-D-fructose 6-phosphate. Its pathway is carbohydrate degradation; pentose phosphate pathway; D-glyceraldehyde 3-phosphate and beta-D-fructose 6-phosphate from D-ribose 5-phosphate and D-xylulose 5-phosphate (non-oxidative stage): step 2/3. Functionally, transaldolase is important for the balance of metabolites in the pentose-phosphate pathway. The sequence is that of Transaldolase 2 (tal2) from Nostoc punctiforme (strain ATCC 29133 / PCC 73102).